The following is a 253-amino-acid chain: Probable proteasome subunit alpha type-7 (253 aa).

Residue serine 104 is modified to Phosphoserine.

The protein belongs to the peptidase T1A family. In terms of assembly, the 26S proteasome consists of a 20S proteasome core and two 19S regulatory subunits. The 20S proteasome core is composed of 28 subunits that are arranged in four stacked rings, resulting in a barrel-shaped structure. The two end rings are each formed by seven alpha subunits, and the two central rings are each formed by seven beta subunits. The catalytic chamber with the active sites is on the inside of the barrel.

Its subcellular location is the cytoplasm. The protein resides in the nucleus. Functionally, the proteasome is a multicatalytic proteinase complex which is characterized by its ability to cleave peptides with Arg, Phe, Tyr, Leu, and Glu adjacent to the leaving group at neutral or slightly basic pH. The proteasome has an ATP-dependent proteolytic activity. This Schizosaccharomyces pombe (strain 972 / ATCC 24843) (Fission yeast) protein is Probable proteasome subunit alpha type-7 (pre10).